The sequence spans 655 residues: MLKHDLDYLELLSESFPTATEAATEIINLEAILNLPKGTEHFLADIHGEYEAFIHVLKNASGSIRRKVDEVFGGQLRQNQKRELCTLIYYPREKLELVKQSDERMEDWYMVTLNQLIKVCQKAAEKYTRSKVRKTLPPKYSYIIQELLHEDGVNPNKSAYISSIFSSIISTGCADDFIIAISETIQRLVIDHLHVVGDVFDRGPGAHIIMDTLMKYHHFDIQWGNHDMLWMGAAVGNASCMANVVRIALRYANLDTLESGYGINLLPLARFAMDTYADDPCTVFKPKLAQADQTYDDKSVYLISQMHKAISIIQFKLEHQIIARHPEYKMDNRDLFHLVNFTDGTIKLSSGVYPMLDMNFPTVDPADPYALTEQEQNIVDRLMGCFMRSEKLQNHLKCLYRHGSMYLTYNMNLLYHASIPLNKDKSLKKVRVGDKTYAGRELLDKVEEMIRTAYVAPEKSDQRLAAVDYMWYLWCGPDSPLFDKAMMTTFERYFIEDKATHHEEKGYYYVYRQEKAVCEMILKEFGLEGPDTHIINGHVPVKAKKGELPIGAEGKLMLIDGGFSKAYQSSTGIAGYTLIFNSQGLHLVQHEPFSSTRKAIEEMEDIKSITVVREVTSHRMLVKDTDNGHLLSKQVENLKKLLQAYSYGLIKERKK.

It belongs to the FBPase class 3 family. Mn(2+) serves as cofactor.

It catalyses the reaction beta-D-fructose 1,6-bisphosphate + H2O = beta-D-fructose 6-phosphate + phosphate. It participates in carbohydrate biosynthesis; gluconeogenesis. The protein is Fructose-1,6-bisphosphatase class 3 of Porphyromonas gingivalis (strain ATCC BAA-308 / W83).